A 167-amino-acid polypeptide reads, in one-letter code: 2-C-methyl-D-erythritol 2,4-cyclodiphosphate synthase (167 aa).

2 residues coordinate a divalent metal cation: aspartate 9 and histidine 11. Residues 9 to 11 and 35 to 36 contribute to the 4-CDP-2-C-methyl-D-erythritol 2-phosphate site; these read DVH and HS. Position 43 (histidine 43) interacts with a divalent metal cation. 4-CDP-2-C-methyl-D-erythritol 2-phosphate-binding positions include 57–59, 62–66, 133–136, phenylalanine 140, and arginine 143; these read DIG, FPDTD, and TTTE.

It belongs to the IspF family. As to quaternary structure, homotrimer. A divalent metal cation is required as a cofactor.

The enzyme catalyses 4-CDP-2-C-methyl-D-erythritol 2-phosphate = 2-C-methyl-D-erythritol 2,4-cyclic diphosphate + CMP. The protein operates within isoprenoid biosynthesis; isopentenyl diphosphate biosynthesis via DXP pathway; isopentenyl diphosphate from 1-deoxy-D-xylulose 5-phosphate: step 4/6. Functionally, involved in the biosynthesis of isopentenyl diphosphate (IPP) and dimethylallyl diphosphate (DMAPP), two major building blocks of isoprenoid compounds. Catalyzes the conversion of 4-diphosphocytidyl-2-C-methyl-D-erythritol 2-phosphate (CDP-ME2P) to 2-C-methyl-D-erythritol 2,4-cyclodiphosphate (ME-CPP) with a corresponding release of cytidine 5-monophosphate (CMP). The polypeptide is 2-C-methyl-D-erythritol 2,4-cyclodiphosphate synthase (Glaesserella parasuis serovar 5 (strain SH0165) (Haemophilus parasuis)).